Consider the following 399-residue polypeptide: DNA replication and repair protein RecF (399 aa).

30–37 lines the ATP pocket; that stretch reads GSNGIGKT.

It belongs to the RecF family.

Its subcellular location is the cytoplasm. Its function is as follows. The RecF protein is involved in DNA metabolism; it is required for DNA replication and normal SOS inducibility. RecF binds preferentially to single-stranded, linear DNA. It also seems to bind ATP. The polypeptide is DNA replication and repair protein RecF (Paenarthrobacter aurescens (strain TC1)).